Here is a 184-residue protein sequence, read N- to C-terminus: Zinc metalloproteinase-disintegrin-like ammodytagin (184 aa).

Positions Lys1–Pro90 constitute a Peptidase M12B domain. Asp20 contacts Ca(2+). Residue His64 participates in Zn(2+) binding. The active site involves Glu65. Zn(2+) is bound by residues His68 and His74. Asn88, Val100, Asn103, Phe105, and Glu107 together coordinate Ca(2+). In terms of domain architecture, Disintegrin spans Pro98–Arg124. Disulfide bonds link Cys114–Cys120 and Cys165–Cys177.

This sequence belongs to the venom metalloproteinase (M12B) family. P-III subfamily. P-IIIc sub-subfamily. As to quaternary structure, heterodimer; disulfide-linked. Zn(2+) is required as a cofactor. In terms of processing, the N-terminus is blocked. N-glycosylated. Expressed by the venom gland.

It is found in the secreted. Its activity is regulated as follows. Inhibited by EDTA, DTT and zinc ions. Partially inhibited by L-cysteine. Not inhibited by 2-propanol or PMSF. Activity is enhanced by calcium or magnesium ions. Functionally, snake venom zinc metalloprotease that has fibrinogenolytic and hemorrhagic activities in mouse and rats. Hydrolyzes the Aalpha-chain (FGA) and more slowly the Bbeta-chain of fibrinogen (FGB), without affecting the gamma-chain. Its hemorrhagic activity results of its involvement in cleavage of basal membrane components (nidogen and fibronectin but not laminin) and depletion of fibrinogen, prothrombin (F2) and factor X (F10) in blood circulation. Also possess potent azocaseinolytic activity and cleaves insulin B-chain, hydrolyzing it at positions Gln(4)-His(5), His(10)-Leu(11) and Tyr(16)-Leu(17). This Vipera ammodytes ammodytes (Western sand viper) protein is Zinc metalloproteinase-disintegrin-like ammodytagin.